We begin with the raw amino-acid sequence, 84 residues long: Cell division topological specificity factor (84 aa).

It belongs to the MinE family.

Its function is as follows. Prevents the cell division inhibition by proteins MinC and MinD at internal division sites while permitting inhibition at polar sites. This ensures cell division at the proper site by restricting the formation of a division septum at the midpoint of the long axis of the cell. In Burkholderia mallei (strain NCTC 10247), this protein is Cell division topological specificity factor.